Here is a 390-residue protein sequence, read N- to C-terminus: GTP 3',8-cyclase, mitochondrial (390 aa).

A mitochondrion-targeting transit peptide spans 1–45; sequence MRRCFSKITDCHLGFKNSNFLLVGSEVGSGSVTRTITTTTSERLF. Residues 69–290 enclose the Radical SAM core domain; the sequence is KFGRLHTYLR…PSIKRMQDHP (222 aa). Arginine 78 contacts GTP. 2 residues coordinate [4Fe-4S] cluster: cysteine 85 and cysteine 89. Tyrosine 91 contributes to the S-adenosyl-L-methionine binding site. Cysteine 92 serves as a coordination point for [4Fe-4S] cluster. GTP is bound at residue arginine 128. Residue glycine 132 coordinates S-adenosyl-L-methionine. Threonine 159 contributes to the GTP binding site. Serine 183 lines the S-adenosyl-L-methionine pocket. Lysine 220 is a binding site for GTP. An S-adenosyl-L-methionine-binding site is contributed by methionine 254. [4Fe-4S] cluster contacts are provided by cysteine 317 and cysteine 320. 322–324 contacts GTP; the sequence is RLR. Cysteine 334 is a [4Fe-4S] cluster binding site.

Belongs to the radical SAM superfamily. MoaA family. Homodimer. The cofactor is [4Fe-4S] cluster. Expressed in all organs, with an abundant expression in the roots.

It localises to the mitochondrion matrix. It catalyses the reaction GTP + AH2 + S-adenosyl-L-methionine = (8S)-3',8-cyclo-7,8-dihydroguanosine 5'-triphosphate + 5'-deoxyadenosine + L-methionine + A + H(+). It participates in cofactor biosynthesis; molybdopterin biosynthesis. In terms of biological role, catalyzes the cyclization of GTP to (8S)-3',8-cyclo-7,8-dihydroguanosine 5'-triphosphate. This is GTP 3',8-cyclase, mitochondrial (CNX2) from Arabidopsis thaliana (Mouse-ear cress).